Reading from the N-terminus, the 789-residue chain is Molybdenum cofactor sulfurase (789 aa).

Lysine 251 bears the N6-(pyridoxal phosphate)lysine mark. Cysteine 422 is an active-site residue. The region spanning 628–789 (GDQVAQWLDQ…LICGETLEVD (162 aa)) is the MOSC domain. Serine 741 is subject to Phosphoserine.

It belongs to the class-V pyridoxal-phosphate-dependent aminotransferase family. MOCOS subfamily. Pyridoxal 5'-phosphate is required as a cofactor.

It catalyses the reaction Mo-molybdopterin + L-cysteine + AH2 = thio-Mo-molybdopterin + L-alanine + A + H2O. It functions in the pathway cofactor biosynthesis; molybdopterin biosynthesis. Its function is as follows. Sulfurates the molybdenum cofactor. Sulfation of molybdenum is essential for xanthine dehydrogenase (XDH) and aldehyde oxidase (ADO) enzymes in which molybdenum cofactor is liganded by 1 oxygen and 1 sulfur atom in active form. In Drosophila willistoni (Fruit fly), this protein is Molybdenum cofactor sulfurase.